A 1486-amino-acid chain; its full sequence is Chromosome partition protein MukB (1486 aa).

Residue 34-41 (GGNGAGKS) coordinates ATP. 3 coiled-coil regions span residues 326–418 (LEAD…QYNQ), 444–480 (LETFQAKELEATEKMLSLEQKMSMAQTAHSQFEQAYQ), and 509–603 (RHLA…RAPV). Positions 666–783 (PGGSEDQRLN…EVPLFGRAAR (118 aa)) are flexible hinge. Coiled coils occupy residues 835 to 923 (EAEI…AKLE), 977 to 1115 (EMLS…TAKA), and 1209 to 1266 (VEAI…QNVS).

This sequence belongs to the SMC family. MukB subfamily. In terms of assembly, homodimerization via its hinge domain. Binds to DNA via its C-terminal region. Interacts, and probably forms a ternary complex, with MukE and MukF via its C-terminal region. The complex formation is stimulated by calcium or magnesium. Interacts with tubulin-related protein FtsZ.

It localises to the cytoplasm. It is found in the nucleoid. Functionally, plays a central role in chromosome condensation, segregation and cell cycle progression. Functions as a homodimer, which is essential for chromosome partition. Involved in negative DNA supercoiling in vivo, and by this means organize and compact chromosomes. May achieve or facilitate chromosome segregation by condensation DNA from both sides of a centrally located replisome during cell division. The protein is Chromosome partition protein MukB of Escherichia coli (strain SMS-3-5 / SECEC).